We begin with the raw amino-acid sequence, 287 residues long: Acetyl-coenzyme A carboxylase carboxyl transferase subunit beta (287 aa).

Positions 33–287 (LFSKCPGCKH…TLLAFHGGQA (255 aa)) constitute a CoA carboxyltransferase N-terminal domain. Residues cysteine 37, cysteine 40, cysteine 55, and cysteine 58 each contribute to the Zn(2+) site. Residues 37–58 (CPGCKHTIYQKDLGNDSVCPNC) form a C4-type zinc finger.

This sequence belongs to the AccD/PCCB family. As to quaternary structure, acetyl-CoA carboxylase is a heterohexamer composed of biotin carboxyl carrier protein (AccB), biotin carboxylase (AccC) and two subunits each of ACCase subunit alpha (AccA) and ACCase subunit beta (AccD). Requires Zn(2+) as cofactor.

It localises to the cytoplasm. The catalysed reaction is N(6)-carboxybiotinyl-L-lysyl-[protein] + acetyl-CoA = N(6)-biotinyl-L-lysyl-[protein] + malonyl-CoA. Its pathway is lipid metabolism; malonyl-CoA biosynthesis; malonyl-CoA from acetyl-CoA: step 1/1. Component of the acetyl coenzyme A carboxylase (ACC) complex. Biotin carboxylase (BC) catalyzes the carboxylation of biotin on its carrier protein (BCCP) and then the CO(2) group is transferred by the transcarboxylase to acetyl-CoA to form malonyl-CoA. The protein is Acetyl-coenzyme A carboxylase carboxyl transferase subunit beta of Streptococcus sanguinis (strain SK36).